The primary structure comprises 479 residues: Integrin-linked protein kinase 1 (479 aa).

Phosphoserine occurs at positions 17 and 26. A disordered region spans residues 29 to 73 (FTRQSSLDPRRTNMRFSFGRQSSLDPIRRSPDSSKSDDEPHMSVP). The span at 54–69 (PIRRSPDSSKSDDEPH) shows a compositional bias: basic and acidic residues. ANK repeat units follow at residues 77 to 106 (DSTMQLLFMASKGDVRGIEELLDEGIDVNS) and 110 to 139 (DGRTALHIAACEGHLGVVKALLSRRANIDA). The Protein kinase domain maps to 194–461 (LEVQVRKSDG…EIIIRLDKIV (268 aa)). ATP-binding positions include 200 to 208 (KSDGISKGA) and Lys-222. Asp-319 serves as the catalytic Proton acceptor.

This sequence belongs to the protein kinase superfamily. Ser/Thr protein kinase family. Interacts with CML9 and POT5/HAK5. Autophosphorylated at Ser-17 and Ser-26.

It is found in the cell membrane. The protein resides in the endoplasmic reticulum membrane. The catalysed reaction is L-seryl-[protein] + ATP = O-phospho-L-seryl-[protein] + ADP + H(+). It carries out the reaction L-threonyl-[protein] + ATP = O-phospho-L-threonyl-[protein] + ADP + H(+). With respect to regulation, kinase activity is suppressed by interaction with CML9. Functions as a link between plant defense pathways, stress responses and potassium homeostasis. Promotes osmotic stress sensitivity, responses to the bacterial-derived pathogen-associated molecular pattern (PAMP) flg22, and resistance to bacterial pathogens. Promotes the accumulation of POT5/HAK5, a potassium transporter that mediates high-affinity uptake during potassium deficiency. The protein is Integrin-linked protein kinase 1 of Arabidopsis thaliana (Mouse-ear cress).